The chain runs to 176 residues: Transcription factor E (176 aa).

The HTH TFE/IIEalpha-type domain occupies 5-89 (IDQLMKDMAR…YWKANVDQIN (85 aa)).

It belongs to the TFE family. Monomer. Interaction with RNA polymerase subunits RpoF and RpoE is necessary for Tfe stimulatory transcription activity. Able to interact with Tbp and RNA polymerase in the absence of DNA promoter. Interacts both with the preinitiation and elongation complexes.

In terms of biological role, transcription factor that plays a role in the activation of archaeal genes transcribed by RNA polymerase. Facilitates transcription initiation by enhancing TATA-box recognition by TATA-box-binding protein (Tbp), and transcription factor B (Tfb) and RNA polymerase recruitment. Not absolutely required for transcription in vitro, but particularly important in cases where Tbp or Tfb function is not optimal. It dynamically alters the nucleic acid-binding properties of RNA polymerases by stabilizing the initiation complex and destabilizing elongation complexes. Seems to translocate with the RNA polymerase following initiation and acts by binding to the non template strand of the transcription bubble in elongation complexes. This Metallosphaera sedula (strain ATCC 51363 / DSM 5348 / JCM 9185 / NBRC 15509 / TH2) protein is Transcription factor E.